A 330-amino-acid polypeptide reads, in one-letter code: Ribosomal RNA small subunit methyltransferase H (330 aa).

S-adenosyl-L-methionine contacts are provided by residues 35–37, Asp-53, Phe-80, Asp-101, and Gln-108; that span reads GGY.

This sequence belongs to the methyltransferase superfamily. RsmH family.

The protein localises to the cytoplasm. The enzyme catalyses cytidine(1402) in 16S rRNA + S-adenosyl-L-methionine = N(4)-methylcytidine(1402) in 16S rRNA + S-adenosyl-L-homocysteine + H(+). Its function is as follows. Specifically methylates the N4 position of cytidine in position 1402 (C1402) of 16S rRNA. In Rhodopseudomonas palustris (strain BisB18), this protein is Ribosomal RNA small subunit methyltransferase H.